The following is an 86-amino-acid chain: UPF0512 protein V (86 aa).

This sequence belongs to the UPF0512 family.

In Dictyostelium discoideum (Social amoeba), this protein is UPF0512 protein V.